A 442-amino-acid chain; its full sequence is Small RNA 2'-O-methyltransferase (442 aa).

S-adenosyl-L-methionine is bound by residues Gly125 and Asp151. Glu209, Glu212, His213, and His260 together coordinate Mg(2+).

It belongs to the methyltransferase superfamily. HEN1 family. Requires Mg(2+) as cofactor. Broadly expressed in the germline and somatic tissues in both hermaphrodites and males.

It is found in the cytoplasm. Its subcellular location is the nucleus. It localises to the nucleoplasm. The protein resides in the cytoplasmic granule. It catalyses the reaction small RNA 3'-end nucleotide + S-adenosyl-L-methionine = small RNA 3'-end 2'-O-methylnucleotide + S-adenosyl-L-homocysteine + H(+). Methyltransferase that adds a 2'-O-methyl group at the 3'-end of PIWI-interacting RNAs (piRNAs) and small interfering RNAs (siRNAs) which are classes of regulatory RNAs that are involved in gene silencing in endogenous RNA interference (RNAi) pathways. Methylation protects the 3'-end of small RNAs from tailing and trimming and could constitute a recognition signal for appropriate argonaute machineries. Methylates and stabilizes 26G-siRNAs (a class of 26 nucleotide siRNAs that possess a monophosphorylated guanine residue at the 5'-end) when they are bound by argonaute protein ergo-1. This occurs in the female germline and embryo, but not in the male germline. Does not methylate 26G-siRNAs bound by argonaute proteins alg-3 or alg-4. Methylates and stabilizes 21U-piRNAs, which are a class of 21 nucleotide piRNAs that possess a uracil residue at the 5'-end, in the male and female germline. In addition, may play a role in exogenous RNAi (exoRNAi) pathways in the germline. This Caenorhabditis elegans protein is Small RNA 2'-O-methyltransferase.